The sequence spans 330 residues: Acrylyl-CoA reductase AcuI (330 aa).

NADP(+)-binding positions include Tyr44, 159–162 (AGGV), 181–183 (TGR), Arg201, Leu247, and Ser272.

It belongs to the zinc-containing alcohol dehydrogenase family. Acrylyl-CoA reductase subfamily. Homodimer.

The protein resides in the cytoplasm. It carries out the reaction propanoyl-CoA + NADP(+) = acryloyl-CoA + NADPH + H(+). In terms of biological role, probably catalyzes the NADPH-dependent reduction of acrylyl-CoA to propanoyl-CoA. Restores acrylate resistance when expressed in an E.coli strain K12 acuI deletion. The sequence is that of Acrylyl-CoA reductase AcuI (acuI) from Ruegeria pomeroyi (strain ATCC 700808 / DSM 15171 / DSS-3) (Silicibacter pomeroyi).